Consider the following 291-residue polypeptide: tRNA dimethylallyltransferase (291 aa).

9–16 is an ATP binding site; the sequence is GTTASGKT. 11–16 lines the substrate pocket; that stretch reads TASGKT. The tract at residues 34 to 37 is interaction with substrate tRNA; that stretch reads DSLC.

This sequence belongs to the IPP transferase family. In terms of assembly, monomer. The cofactor is Mg(2+).

The enzyme catalyses adenosine(37) in tRNA + dimethylallyl diphosphate = N(6)-dimethylallyladenosine(37) in tRNA + diphosphate. Catalyzes the transfer of a dimethylallyl group onto the adenine at position 37 in tRNAs that read codons beginning with uridine, leading to the formation of N6-(dimethylallyl)adenosine (i(6)A). The chain is tRNA dimethylallyltransferase from Campylobacter lari (strain RM2100 / D67 / ATCC BAA-1060).